The chain runs to 600 residues: UvrABC system protein C (600 aa).

Residues 15 to 100 (NSAGVYEYFN…IKQLHPKYNI (86 aa)) enclose the GIY-YIG domain. One can recognise a UVR domain in the interval 203 to 238 (SVLLKNLEKQMLVLAQNENYEEAAKIRDQIATIKDL).

This sequence belongs to the UvrC family. In terms of assembly, interacts with UvrB in an incision complex.

Its subcellular location is the cytoplasm. In terms of biological role, the UvrABC repair system catalyzes the recognition and processing of DNA lesions. UvrC both incises the 5' and 3' sides of the lesion. The N-terminal half is responsible for the 3' incision and the C-terminal half is responsible for the 5' incision. In Campylobacter jejuni subsp. doylei (strain ATCC BAA-1458 / RM4099 / 269.97), this protein is UvrABC system protein C.